Consider the following 252-residue polypeptide: Phosphate import ATP-binding protein PstB (252 aa).

The ABC transporter domain occupies 6–247; sequence MSIRDLNFYY…PAQKATEDYI (242 aa). 38–45 serves as a coordination point for ATP; it reads GPSGCGKS.

Belongs to the ABC transporter superfamily. Phosphate importer (TC 3.A.1.7) family. The complex is composed of two ATP-binding proteins (PstB), two transmembrane proteins (PstC and PstA) and a solute-binding protein (PstS).

Its subcellular location is the cell inner membrane. The enzyme catalyses phosphate(out) + ATP + H2O = ADP + 2 phosphate(in) + H(+). Functionally, part of the ABC transporter complex PstSACB involved in phosphate import. Responsible for energy coupling to the transport system. This is Phosphate import ATP-binding protein PstB from Psychrobacter cryohalolentis (strain ATCC BAA-1226 / DSM 17306 / VKM B-2378 / K5).